The sequence spans 398 residues: Phosphoglycerate kinase (398 aa).

Residues 21–23, Arg36, 59–62, Arg119, and Arg157 each bind substrate; these read DFN and HLGR. ATP is bound by residues Lys208, Gly296, Glu327, and 354–357; that span reads GGDS.

It belongs to the phosphoglycerate kinase family. Monomer.

The protein localises to the cytoplasm. It catalyses the reaction (2R)-3-phosphoglycerate + ATP = (2R)-3-phospho-glyceroyl phosphate + ADP. The protein operates within carbohydrate degradation; glycolysis; pyruvate from D-glyceraldehyde 3-phosphate: step 2/5. This chain is Phosphoglycerate kinase, found in Streptococcus pyogenes serotype M18 (strain MGAS8232).